The following is a 421-amino-acid chain: Elongation factor 1-alpha (421 aa).

Residues 4–220 (NRHQNLAVIG…NGLPVPQPPT (217 aa)) enclose the tr-type G domain. A G1 region spans residues 13 to 20 (GHVDHGKS). A GTP-binding site is contributed by 13 to 20 (GHVDHGKS). S20 serves as a coordination point for Mg(2+). The segment at 69–73 (GVTID) is G2. The segment at 90–93 (DCPG) is G3. GTP-binding positions include 90 to 94 (DCPGH) and 145 to 148 (NKMD). The segment at 145–148 (NKMD) is G4. The G5 stretch occupies residues 184 to 186 (SAF).

The protein belongs to the TRAFAC class translation factor GTPase superfamily. Classic translation factor GTPase family. EF-Tu/EF-1A subfamily.

It localises to the cytoplasm. It carries out the reaction GTP + H2O = GDP + phosphate + H(+). Functionally, GTP hydrolase that promotes the GTP-dependent binding of aminoacyl-tRNA to the A-site of ribosomes during protein biosynthesis. The chain is Elongation factor 1-alpha from Halobacterium salinarum (strain ATCC 700922 / JCM 11081 / NRC-1) (Halobacterium halobium).